A 302-amino-acid chain; its full sequence is Tyrosine recombinase XerC (302 aa).

The 85-residue stretch at 6–90 folds into the Core-binding (CB) domain; that stretch reads DLEVTCLQDY…AIKQWGEFLL (85 aa). The region spanning 111-290 is the Tyr recombinase domain; that stretch reads PLPKNMDVDS…DFQHLAKVYD (180 aa). Residues Arg-150, Lys-174, His-242, Arg-245, and His-268 contribute to the active site. Residue Tyr-277 is the O-(3'-phospho-DNA)-tyrosine intermediate of the active site.

This sequence belongs to the 'phage' integrase family. XerC subfamily. In terms of assembly, forms a cyclic heterotetrameric complex composed of two molecules of XerC and two molecules of XerD.

The protein localises to the cytoplasm. Functionally, site-specific tyrosine recombinase, which acts by catalyzing the cutting and rejoining of the recombining DNA molecules. The XerC-XerD complex is essential to convert dimers of the bacterial chromosome into monomers to permit their segregation at cell division. It also contributes to the segregational stability of plasmids. In Shewanella putrefaciens (strain CN-32 / ATCC BAA-453), this protein is Tyrosine recombinase XerC.